Here is a 271-residue protein sequence, read N- to C-terminus: GATA transcription factor 19 (271 aa).

The interval methionine 1–alanine 23 is disordered. One can recognise a Tify domain in the interval leucine 33–glycine 68. Residues arginine 95–arginine 137 enclose the CCT domain. A GATA-type zinc finger spans residues cysteine 166–cysteine 193. The segment at asparagine 238–serine 271 is disordered. The span at glutamine 252–serine 271 shows a compositional bias: basic and acidic residues.

It belongs to the type IV zinc-finger family. Class C subfamily.

It localises to the nucleus. Transcriptional activator that specifically binds 5'-GATA-3' or 5'-GAT-3' motifs within gene promoters. The protein is GATA transcription factor 19 of Oryza sativa subsp. indica (Rice).